A 468-amino-acid polypeptide reads, in one-letter code: uncharacterized protein (468 aa).

Residues 447–468 (AVHVSNGDKPKVALPDTQLGSH) form a disordered region.

This sequence belongs to the mycobacterial PPE family.

This is an uncharacterized protein from Mycobacterium tuberculosis (strain CDC 1551 / Oshkosh).